Here is a 296-residue protein sequence, read N- to C-terminus: 4-hydroxybenzoate octaprenyltransferase (296 aa).

9 helical membrane passes run 29–49, 55–75, 102–122, 124–141, 146–166, 169–189, 216–236, 239–259, and 271–291; these read IGIYLLLWPTLWALWVAAEGV, LFIFVFGVILMRAAGCVINDY, ALVLFAVLVTASFVLVLFTNA, TIWLSFGGLALAACYPFM, FYPQVVLGAAFSWGMPMAFTA, GSLPPEAWLLYIANLLWTVAY, ADRLIIASLQGLALLCLLLAG, FELGVWFHAGLLVAAACFVWE, and CFNAFLHNHWAGLAIFVGIVL.

This sequence belongs to the UbiA prenyltransferase family. Mg(2+) serves as cofactor.

It is found in the cell inner membrane. The enzyme catalyses all-trans-octaprenyl diphosphate + 4-hydroxybenzoate = 4-hydroxy-3-(all-trans-octaprenyl)benzoate + diphosphate. Its pathway is cofactor biosynthesis; ubiquinone biosynthesis. Functionally, catalyzes the prenylation of para-hydroxybenzoate (PHB) with an all-trans polyprenyl group. Mediates the second step in the final reaction sequence of ubiquinone-8 (UQ-8) biosynthesis, which is the condensation of the polyisoprenoid side chain with PHB, generating the first membrane-bound Q intermediate 3-octaprenyl-4-hydroxybenzoate. The polypeptide is 4-hydroxybenzoate octaprenyltransferase (Ectopseudomonas mendocina (strain ymp) (Pseudomonas mendocina)).